The primary structure comprises 156 residues: Transcription elongation factor GreA (156 aa).

Residues 12–72 (YKKLEDELST…KEIEHELKYA (61 aa)) are a coiled coil.

Belongs to the GreA/GreB family.

Necessary for efficient RNA polymerase transcription elongation past template-encoded arresting sites. The arresting sites in DNA have the property of trapping a certain fraction of elongating RNA polymerases that pass through, resulting in locked ternary complexes. Cleavage of the nascent transcript by cleavage factors such as GreA or GreB allows the resumption of elongation from the new 3'terminus. GreA releases sequences of 2 to 3 nucleotides. This is Transcription elongation factor GreA from Dehalococcoides mccartyi (strain ATCC BAA-2266 / KCTC 15142 / 195) (Dehalococcoides ethenogenes (strain 195)).